The chain runs to 311 residues: Olfactory receptor 4K1 (311 aa).

The Extracellular segment spans residues 1–25; it reads MAHTNESMVSEFVLLGLSNSWGLQL. A glycan (N-linked (GlcNAc...) asparagine) is linked at N5. A helical transmembrane segment spans residues 26-49; sequence FFFAIFSIVYVTSVLGNVLIIVII. The Cytoplasmic portion of the chain corresponds to 50-57; it reads SFDSHLNS. A helical transmembrane segment spans residues 58-79; the sequence is PMYFLLSNLSFIDICQSNFATP. Over 80–100 the chain is Extracellular; sequence KMLVDFFIERKTISFEGCMAQ. A disulfide bridge links C97 with C189. A helical membrane pass occupies residues 101–120; the sequence is IFVLHSFVGSEMMLLVAMAY. Topologically, residues 121–139 are cytoplasmic; that stretch reads DRFIAICKPLHYSTIMNRR. A helical transmembrane segment spans residues 140–158; the sequence is LCVIFVSISWAVGVLHSVS. At 159-195 the chain is on the extracellular side; it reads HLAFTVDLPFCGPNEVDSFFCDLPLVIELACMDTYEM. Residues 196-219 form a helical membrane-spanning segment; it reads EIMTLTNSGLISLSCFLALIISYT. Topologically, residues 220-235 are cytoplasmic; the sequence is IILIGVRCRSSSGSSK. Residues 236-258 form a helical membrane-spanning segment; that stretch reads ALSTLTAHITVVILFFGPCIYFY. Over 259 to 269 the chain is Extracellular; that stretch reads IWPFSRLPVDK. Residues 270–289 form a helical membrane-spanning segment; that stretch reads FLSVFYTVCTPLLNPIIYSL. Topologically, residues 290–311 are cytoplasmic; sequence RNEDVKAAMWKLRNRHVNSWKN.

Belongs to the G-protein coupled receptor 1 family.

It is found in the cell membrane. Odorant receptor. The chain is Olfactory receptor 4K1 (OR4K1) from Homo sapiens (Human).